The following is a 156-amino-acid chain: Transcription elongation factor GreA (156 aa).

The stretch at methionine 1–glutamate 84 forms a coiled coil.

It belongs to the GreA/GreB family.

In terms of biological role, necessary for efficient RNA polymerase transcription elongation past template-encoded arresting sites. The arresting sites in DNA have the property of trapping a certain fraction of elongating RNA polymerases that pass through, resulting in locked ternary complexes. Cleavage of the nascent transcript by cleavage factors such as GreA or GreB allows the resumption of elongation from the new 3'terminus. GreA releases sequences of 2 to 3 nucleotides. The sequence is that of Transcription elongation factor GreA from Ureaplasma parvum serovar 3 (strain ATCC 27815 / 27 / NCTC 11736).